Here is a 33-residue protein sequence, read N- to C-terminus: Potassium channel toxin alpha-KTx 24.1 (33 aa).

4 cysteine pairs are disulfide-bonded: cysteine 4–cysteine 23, cysteine 9–cysteine 28, cysteine 13–cysteine 30, and cysteine 18–cysteine 33.

The protein belongs to the short scorpion toxin superfamily. Potassium channel inhibitor family. Alpha-KTx 24 subfamily. Post-translationally, contains 4 disulfide bonds. In terms of tissue distribution, expressed by the venom gland.

The protein resides in the secreted. Reversibly blocks voltage-gated potassium channels Kv1.2/KCNA2, Kv1.3/KCNA3 and, weakly, Shaker B. This Pandinus imperator (Emperor scorpion) protein is Potassium channel toxin alpha-KTx 24.1.